Here is a 127-residue protein sequence, read N- to C-terminus: Aspartate 1-decarboxylase (127 aa).

Serine 25 functions as the Schiff-base intermediate with substrate; via pyruvic acid in the catalytic mechanism. A Pyruvic acid (Ser) modification is found at serine 25. A substrate-binding site is contributed by threonine 57. Residue tyrosine 58 is the Proton donor of the active site. Position 73 to 75 (73 to 75 (GAA)) interacts with substrate.

This sequence belongs to the PanD family. In terms of assembly, heterooctamer of four alpha and four beta subunits. It depends on pyruvate as a cofactor. In terms of processing, is synthesized initially as an inactive proenzyme, which is activated by self-cleavage at a specific serine bond to produce a beta-subunit with a hydroxyl group at its C-terminus and an alpha-subunit with a pyruvoyl group at its N-terminus.

It is found in the cytoplasm. The catalysed reaction is L-aspartate + H(+) = beta-alanine + CO2. It participates in cofactor biosynthesis; (R)-pantothenate biosynthesis; beta-alanine from L-aspartate: step 1/1. Functionally, catalyzes the pyruvoyl-dependent decarboxylation of aspartate to produce beta-alanine. This is Aspartate 1-decarboxylase from Bacillus cereus (strain G9842).